The following is a 421-amino-acid chain: Gamma-glutamyl phosphate reductase (421 aa).

The protein belongs to the gamma-glutamyl phosphate reductase family.

Its subcellular location is the cytoplasm. It carries out the reaction L-glutamate 5-semialdehyde + phosphate + NADP(+) = L-glutamyl 5-phosphate + NADPH + H(+). It participates in amino-acid biosynthesis; L-proline biosynthesis; L-glutamate 5-semialdehyde from L-glutamate: step 2/2. Functionally, catalyzes the NADPH-dependent reduction of L-glutamate 5-phosphate into L-glutamate 5-semialdehyde and phosphate. The product spontaneously undergoes cyclization to form 1-pyrroline-5-carboxylate. In Pseudomonas aeruginosa (strain LESB58), this protein is Gamma-glutamyl phosphate reductase.